A 211-amino-acid polypeptide reads, in one-letter code: Protein-L-isoaspartate O-methyltransferase (211 aa).

Residue Ser62 is part of the active site.

This sequence belongs to the methyltransferase superfamily. L-isoaspartyl/D-aspartyl protein methyltransferase family.

The protein localises to the cytoplasm. It carries out the reaction [protein]-L-isoaspartate + S-adenosyl-L-methionine = [protein]-L-isoaspartate alpha-methyl ester + S-adenosyl-L-homocysteine. In terms of biological role, catalyzes the methyl esterification of L-isoaspartyl residues in peptides and proteins that result from spontaneous decomposition of normal L-aspartyl and L-asparaginyl residues. It plays a role in the repair and/or degradation of damaged proteins. In Shewanella oneidensis (strain ATCC 700550 / JCM 31522 / CIP 106686 / LMG 19005 / NCIMB 14063 / MR-1), this protein is Protein-L-isoaspartate O-methyltransferase.